A 122-amino-acid chain; its full sequence is Large ribosomal subunit protein uL14 (122 aa).

Belongs to the universal ribosomal protein uL14 family. Part of the 50S ribosomal subunit. Forms a cluster with proteins L3 and L19. In the 70S ribosome, L14 and L19 interact and together make contacts with the 16S rRNA in bridges B5 and B8.

Its function is as follows. Binds to 23S rRNA. Forms part of two intersubunit bridges in the 70S ribosome. The protein is Large ribosomal subunit protein uL14 of Pediococcus pentosaceus (strain ATCC 25745 / CCUG 21536 / LMG 10740 / 183-1w).